Here is a 379-residue protein sequence, read N- to C-terminus: Guanine nucleotide-binding protein G(s) subunit alpha (379 aa).

Positions 1 to 25 (MGCLGNSKTEDQRNEEKVQRETNKK) are disordered. Gly-2 carries the N-palmitoyl glycine lipid modification. Cys-3 carries the S-palmitoyl cysteine lipid modification. Residues 8 to 25 (KTEDQRNEEKVQRETNKK) are compositionally biased toward basic and acidic residues. Positions 39-379 (ATHRLLLLGA…RMHLRQYELL (341 aa)) constitute a G-alpha domain. A G1 motif region spans residues 42 to 55 (RLLLLGAGESGKSS). GTP contacts are provided by residues 47-55 (GAGESGKSS), 182-189 (LLRCRVLT), 208-212 (DVGGQ), 277-280 (NKQD), and Ala-351. Positions 54 and 189 each coordinate Mg(2+). A G2 motif region spans residues 181–189 (DLLRCRVLT). The tract at residues 204-213 (FHMFDVGGQR) is G3 motif. Residues 273-280 (ILFLNKQD) are G4 motif. The interval 349 to 354 (TCAVDT) is G5 motif.

Belongs to the G-alpha family. G(s) subfamily. In terms of assembly, heterotrimeric G proteins are composed of 3 units; alpha, beta and gamma. The alpha chain contains the guanine nucleotide binding site.

Its subcellular location is the cell membrane. Its function is as follows. Guanine nucleotide-binding proteins (G proteins) function as transducers in numerous signaling pathways controlled by G protein-coupled receptors (GPCRs). Signaling involves the activation of adenylyl cyclases, resulting in increased levels of the signaling molecule cAMP. GNAS functions downstream of several GPCRs, including beta-adrenergic receptors. Stimulates the Ras signaling pathway. This Xenopus laevis (African clawed frog) protein is Guanine nucleotide-binding protein G(s) subunit alpha (gnas).